An 80-amino-acid polypeptide reads, in one-letter code: Histone H1.M6.1 (80 aa).

The tract at residues 1 to 80 (MSDAAVPPKK…KAVKKAPKKK (80 aa)) is disordered. The segment covering 11-80 (ASPKKAAAKK…KAVKKAPKKK (70 aa)) has biased composition (basic residues).

The protein resides in the nucleus. It is found in the chromosome. In Trypanosoma cruzi, this protein is Histone H1.M6.1.